A 213-amino-acid polypeptide reads, in one-letter code: Peroxynitrite isomerase 2 (213 aa).

The short motif at 58-64 (GVWRGEG) is the GXWXGXG element. Heme b contacts are provided by lysine 176 and histidine 203.

Belongs to the nitrobindin family. As to quaternary structure, homodimer. Heme b serves as cofactor.

The catalysed reaction is peroxynitrite = nitrate. Its pathway is nitrogen metabolism. In terms of biological role, heme-binding protein able to scavenge peroxynitrite and to protect free L-tyrosine against peroxynitrite-mediated nitration, by acting as a peroxynitrite isomerase that converts peroxynitrite to nitrate. Therefore, this protein likely plays a role in peroxynitrite sensing and in the detoxification of reactive nitrogen and oxygen species (RNS and ROS, respectively). Is able to bind nitric oxide (NO) in vitro, but may act as a sensor of peroxynitrite levels in vivo. This is Peroxynitrite isomerase 2 from Rhodococcus jostii (strain RHA1).